The following is a 426-amino-acid chain: Adenylosuccinate synthetase (426 aa).

Residues 18 to 24 (GDEGKGK) and 46 to 48 (GHT) contribute to the GTP site. Aspartate 19 serves as the catalytic Proton acceptor. The Mg(2+) site is built by aspartate 19 and glycine 46. IMP-binding positions include 19-22 (DEGK), 44-47 (NAGH), threonine 136, arginine 150, glutamine 222, threonine 237, and arginine 301. Histidine 47 serves as the catalytic Proton donor. Position 297 to 303 (297 to 303 (VTTKRKR)) interacts with substrate. GTP-binding positions include arginine 303, 329–331 (KID), and 413–415 (GTG).

Belongs to the adenylosuccinate synthetase family. In terms of assembly, homodimer. The cofactor is Mg(2+).

It localises to the cytoplasm. It carries out the reaction IMP + L-aspartate + GTP = N(6)-(1,2-dicarboxyethyl)-AMP + GDP + phosphate + 2 H(+). The protein operates within purine metabolism; AMP biosynthesis via de novo pathway; AMP from IMP: step 1/2. Its function is as follows. Plays an important role in the de novo pathway and in the salvage pathway of purine nucleotide biosynthesis. Catalyzes the first committed step in the biosynthesis of AMP from IMP. This chain is Adenylosuccinate synthetase, found in Schistosoma mansoni (Blood fluke).